Reading from the N-terminus, the 181-residue chain is ATP synthase subunit b, chloroplastic (181 aa).

The helical transmembrane segment at Leu27–Leu49 threads the bilayer.

This sequence belongs to the ATPase B chain family. As to quaternary structure, F-type ATPases have 2 components, F(1) - the catalytic core - and F(0) - the membrane proton channel. F(1) has five subunits: alpha(3), beta(3), gamma(1), delta(1), epsilon(1). F(0) has four main subunits: a(1), b(1), b'(1) and c(10-14). The alpha and beta chains form an alternating ring which encloses part of the gamma chain. F(1) is attached to F(0) by a central stalk formed by the gamma and epsilon chains, while a peripheral stalk is formed by the delta, b and b' chains.

It localises to the plastid. It is found in the chloroplast thylakoid membrane. Its function is as follows. F(1)F(0) ATP synthase produces ATP from ADP in the presence of a proton or sodium gradient. F-type ATPases consist of two structural domains, F(1) containing the extramembraneous catalytic core and F(0) containing the membrane proton channel, linked together by a central stalk and a peripheral stalk. During catalysis, ATP synthesis in the catalytic domain of F(1) is coupled via a rotary mechanism of the central stalk subunits to proton translocation. In terms of biological role, component of the F(0) channel, it forms part of the peripheral stalk, linking F(1) to F(0). The chain is ATP synthase subunit b, chloroplastic from Lemna minor (Common duckweed).